We begin with the raw amino-acid sequence, 157 residues long: Large ribosomal subunit protein uL13m (157 aa).

The N-terminal 29 residues, 1-29 (MSTLNGQTALAYAKVWHHVSAKNVPLGRL), are a transit peptide targeting the mitochondrion.

This sequence belongs to the universal ribosomal protein uL13 family. Component of the mitochondrial large ribosomal subunit (mt-LSU). Mature yeast 74S mitochondrial ribosomes consist of a small (37S) and a large (54S) subunit. The 37S small subunit contains a 15S ribosomal RNA (15S mt-rRNA) and at least 32 different proteins. The 54S large subunit contains a 21S rRNA (21S mt-rRNA) and at least 45 different proteins.

It localises to the mitochondrion. Functionally, component of the mitochondrial ribosome (mitoribosome), a dedicated translation machinery responsible for the synthesis of mitochondrial genome-encoded proteins, including at least some of the essential transmembrane subunits of the mitochondrial respiratory chain. The mitoribosomes are attached to the mitochondrial inner membrane and translation products are cotranslationally integrated into the membrane. The sequence is that of Large ribosomal subunit protein uL13m from Schizosaccharomyces pombe (strain 972 / ATCC 24843) (Fission yeast).